The chain runs to 135 residues: Putative nickel-responsive regulator (135 aa).

Ni(2+) is bound by residues H79, H90, H92, and C98.

This sequence belongs to the transcriptional regulatory CopG/NikR family. The cofactor is Ni(2+).

Its function is as follows. Transcriptional regulator. This Dictyoglomus thermophilum (strain ATCC 35947 / DSM 3960 / H-6-12) protein is Putative nickel-responsive regulator.